The chain runs to 402 residues: Cytochrome b561 and DOMON domain-containing protein At4g17280 (402 aa).

A signal peptide spans 1 to 31 (MSNHMSIMKFLNQILCLSLILSISMTTLSFA). The region spanning 54 to 171 (LDSFLHYTYE…GTINTVWQDG (118 aa)) is the DOMON domain. In terms of domain architecture, Cytochrome b561 spans 183–379 (TSGNNVRSVS…LEAFTWYVVI (197 aa)). A run of 2 helical transmembrane segments spans residues 218–238 (IHGI…AIIA) and 250–270 (AWFY…VAGW). Heme b contacts are provided by histidine 219, histidine 255, and histidine 288. Residues 290–310 (AIGIALFSLATVQVFAMFLRP) form a helical membrane-spanning segment. Histidine 324 provides a ligand contact to heme b. 2 consecutive transmembrane segments (helical) span residues 326–346 (TIGY…LGIL) and 359–379 (IIVV…YVVI).

Heme b serves as cofactor.

It is found in the membrane. Its function is as follows. May act as a catecholamine-responsive trans-membrane electron transporter. The polypeptide is Cytochrome b561 and DOMON domain-containing protein At4g17280 (Arabidopsis thaliana (Mouse-ear cress)).